We begin with the raw amino-acid sequence, 178 residues long: ATP synthase subunit delta (178 aa).

It belongs to the ATPase delta chain family. As to quaternary structure, F-type ATPases have 2 components, F(1) - the catalytic core - and F(0) - the membrane proton channel. F(1) has five subunits: alpha(3), beta(3), gamma(1), delta(1), epsilon(1). F(0) has three main subunits: a(1), b(2) and c(10-14). The alpha and beta chains form an alternating ring which encloses part of the gamma chain. F(1) is attached to F(0) by a central stalk formed by the gamma and epsilon chains, while a peripheral stalk is formed by the delta and b chains.

It is found in the cell membrane. In terms of biological role, f(1)F(0) ATP synthase produces ATP from ADP in the presence of a proton or sodium gradient. F-type ATPases consist of two structural domains, F(1) containing the extramembraneous catalytic core and F(0) containing the membrane proton channel, linked together by a central stalk and a peripheral stalk. During catalysis, ATP synthesis in the catalytic domain of F(1) is coupled via a rotary mechanism of the central stalk subunits to proton translocation. This protein is part of the stalk that links CF(0) to CF(1). It either transmits conformational changes from CF(0) to CF(1) or is implicated in proton conduction. The protein is ATP synthase subunit delta of Lysinibacillus sphaericus (strain C3-41).